The sequence spans 667 residues: mRNA cap guanine-N(7) methyltransferase (667 aa).

Basic and acidic residues predominate over residues 1-19 (MYDPARDSWEERDGDEARS). Positions 1–272 (MYDPARDSWE…RRRQEERERA (272 aa)) are disordered. The span at 33–52 (FSSSEQIYGASGENNNTTDL) shows a compositional bias: polar residues. Low complexity predominate over residues 72–87 (SPPAQSTTQTPPSIST). Polar residues predominate over residues 88–128 (HVQSPVNPAAQEASNTQSLTSAAQNQSNKSTTTMDNTSGSA). A compositionally biased stretch (basic and acidic residues) spans 132–142 (PRADPSDKSNR). Over residues 147 to 156 (ASPTDQNGSQ) the composition is skewed to polar residues. Residues 256 to 272 (LVDRETLRRRQEERERA) are compositionally biased toward basic and acidic residues. The 359-residue stretch at 309–667 (SKIKGLRSFN…FYHAFCFYKV (359 aa)) folds into the mRNA cap 0 methyltransferase domain. 318-319 (NN) contributes to the mRNA binding site. Residues Lys322, Gly365, Asp389, Asp427, 470 to 472 (MFT), and Tyr475 each bind S-adenosyl-L-methionine. A compositionally biased stretch (basic and acidic residues) spans 521-535 (KKERQSQAKKEKTDE). The tract at residues 521–547 (KKERQSQAKKEKTDEAPEDGEVEEDDG) is disordered. The span at 536–547 (APEDGEVEEDDG) shows a compositional bias: acidic residues.

This sequence belongs to the class I-like SAM-binding methyltransferase superfamily. mRNA cap 0 methyltransferase family.

The protein localises to the nucleus. The enzyme catalyses a 5'-end (5'-triphosphoguanosine)-ribonucleoside in mRNA + S-adenosyl-L-methionine = a 5'-end (N(7)-methyl 5'-triphosphoguanosine)-ribonucleoside in mRNA + S-adenosyl-L-homocysteine. Functionally, responsible for methylating the 5'-cap structure of mRNAs. The protein is mRNA cap guanine-N(7) methyltransferase (abd1) of Neosartorya fischeri (strain ATCC 1020 / DSM 3700 / CBS 544.65 / FGSC A1164 / JCM 1740 / NRRL 181 / WB 181) (Aspergillus fischerianus).